Consider the following 264-residue polypeptide: 4-hydroxy-tetrahydrodipicolinate reductase (264 aa).

10–15 (GCLGRQ) contributes to the NAD(+) binding site. Arginine 37 is a binding site for NADP(+). Residues 99–101 (GTT) and 121–124 (SANL) each bind NAD(+). Histidine 153 functions as the Proton donor/acceptor in the catalytic mechanism. Histidine 154 contacts (S)-2,3,4,5-tetrahydrodipicolinate. Lysine 157 serves as the catalytic Proton donor. 163–164 (GT) is a binding site for (S)-2,3,4,5-tetrahydrodipicolinate.

Belongs to the DapB family.

The protein resides in the cytoplasm. It catalyses the reaction (S)-2,3,4,5-tetrahydrodipicolinate + NAD(+) + H2O = (2S,4S)-4-hydroxy-2,3,4,5-tetrahydrodipicolinate + NADH + H(+). It carries out the reaction (S)-2,3,4,5-tetrahydrodipicolinate + NADP(+) + H2O = (2S,4S)-4-hydroxy-2,3,4,5-tetrahydrodipicolinate + NADPH + H(+). Its pathway is amino-acid biosynthesis; L-lysine biosynthesis via DAP pathway; (S)-tetrahydrodipicolinate from L-aspartate: step 4/4. Its function is as follows. Catalyzes the conversion of 4-hydroxy-tetrahydrodipicolinate (HTPA) to tetrahydrodipicolinate. This is 4-hydroxy-tetrahydrodipicolinate reductase from Ehrlichia ruminantium (strain Gardel).